The chain runs to 221 residues: Germin-like protein 5-1 (221 aa).

Positions 1–25 are cleaved as a signal peptide; it reads MARPSLPCAVVAVLLLALLPTPSTA. Cys35 and Cys50 are oxidised to a cystine. One can recognise a Cupin type-1 domain in the interval 62-210; the sequence is KGLAAAGNTN…AFQVGTKEVE (149 aa). Asn71 carries an N-linked (GlcNAc...) asparagine glycan. The Mn(2+) site is built by His110, His112, Glu117, and His156.

It belongs to the germin family. As to quaternary structure, oligomer (believed to be a pentamer but probably hexamer).

Its subcellular location is the secreted. The protein localises to the extracellular space. It localises to the apoplast. Its function is as follows. May play a role in plant defense. Probably has no oxalate oxidase activity even if the active site is conserved. This chain is Germin-like protein 5-1, found in Oryza sativa subsp. japonica (Rice).